Reading from the N-terminus, the 250-residue chain is MTPFRRPIVLATSASAPFPPAEAALTDPDGLLAVGGDLSPQRLLNAYAHGIFPWYSDGRPILWWSPDPRMVFRTDGVRLSSRFKRQLRASTWTVRADTAFEQVIDACAASPRPGQDGTWITAEMQQAYIALHRLGHAHSIEVFDGARLVGGIYGVAVGRMFFGESMFSGESGGSKVALAALAADLHGRGWPLIDAQVENPHLLSMGAERLPRAEFLHDVQRQVALAEQPGSWSQRYGEHAASDLCETHLT.

Belongs to the L/F-transferase family.

The protein resides in the cytoplasm. It carries out the reaction N-terminal L-lysyl-[protein] + L-leucyl-tRNA(Leu) = N-terminal L-leucyl-L-lysyl-[protein] + tRNA(Leu) + H(+). The catalysed reaction is N-terminal L-arginyl-[protein] + L-leucyl-tRNA(Leu) = N-terminal L-leucyl-L-arginyl-[protein] + tRNA(Leu) + H(+). The enzyme catalyses L-phenylalanyl-tRNA(Phe) + an N-terminal L-alpha-aminoacyl-[protein] = an N-terminal L-phenylalanyl-L-alpha-aminoacyl-[protein] + tRNA(Phe). Functionally, functions in the N-end rule pathway of protein degradation where it conjugates Leu, Phe and, less efficiently, Met from aminoacyl-tRNAs to the N-termini of proteins containing an N-terminal arginine or lysine. The polypeptide is Leucyl/phenylalanyl-tRNA--protein transferase (Xanthomonas oryzae pv. oryzae (strain MAFF 311018)).